Reading from the N-terminus, the 420-residue chain is Caspase-12 (420 aa).

Positions 1–92 (MAAKRTHERD…QLSLQFPSDD (92 aa)) constitute a CARD domain. Phosphoserine occurs at positions 85 and 90. A disordered region spans residues 93 to 115 (EEDELQKMFTPSSASESRGKVED). Catalysis depends on residues His251 and Cys299.

This sequence belongs to the peptidase C14A family. In terms of assembly, heterotetramer that consists of two anti-parallel arranged heterodimers, each one formed by two subunits (Potential). May interact with TRAF2.

In terms of biological role, involved in the activation cascade of caspases responsible for apoptosis execution. The protein is Caspase-12 (Casp12) of Rattus norvegicus (Rat).